A 152-amino-acid polypeptide reads, in one-letter code: Xanthine-guanine phosphoribosyltransferase (152 aa).

Residues 37-38, R69, and 88-96 contribute to the 5-phospho-alpha-D-ribose 1-diphosphate site; these read RG and DDLVDTGGT. R69 serves as a coordination point for GMP. Residue D89 participates in Mg(2+) binding. Guanine is bound by residues D92 and I135. D92 and I135 together coordinate xanthine. GMP contacts are provided by residues 92–96 and 134–135; these read DTGGT and WI.

Belongs to the purine/pyrimidine phosphoribosyltransferase family. XGPT subfamily. Homotetramer. Mg(2+) is required as a cofactor.

The protein resides in the cell inner membrane. The enzyme catalyses GMP + diphosphate = guanine + 5-phospho-alpha-D-ribose 1-diphosphate. The catalysed reaction is XMP + diphosphate = xanthine + 5-phospho-alpha-D-ribose 1-diphosphate. It carries out the reaction IMP + diphosphate = hypoxanthine + 5-phospho-alpha-D-ribose 1-diphosphate. It functions in the pathway purine metabolism; GMP biosynthesis via salvage pathway; GMP from guanine: step 1/1. The protein operates within purine metabolism; XMP biosynthesis via salvage pathway; XMP from xanthine: step 1/1. Functionally, purine salvage pathway enzyme that catalyzes the transfer of the ribosyl-5-phosphate group from 5-phospho-alpha-D-ribose 1-diphosphate (PRPP) to the N9 position of the 6-oxopurines guanine and xanthine to form the corresponding ribonucleotides GMP (guanosine 5'-monophosphate) and XMP (xanthosine 5'-monophosphate), with the release of PPi. To a lesser extent, also acts on hypoxanthine. This chain is Xanthine-guanine phosphoribosyltransferase, found in Shigella boydii serotype 4 (strain Sb227).